An 87-amino-acid chain; its full sequence is Large ribosomal subunit protein bL27 (87 aa).

Residues methionine 1–leucine 21 form a disordered region.

The protein belongs to the bacterial ribosomal protein bL27 family.

The polypeptide is Large ribosomal subunit protein bL27 (Paraburkholderia phytofirmans (strain DSM 17436 / LMG 22146 / PsJN) (Burkholderia phytofirmans)).